Consider the following 177-residue polypeptide: Large ribosomal subunit protein uL6 (177 aa).

Belongs to the universal ribosomal protein uL6 family. As to quaternary structure, part of the 50S ribosomal subunit.

Functionally, this protein binds to the 23S rRNA, and is important in its secondary structure. It is located near the subunit interface in the base of the L7/L12 stalk, and near the tRNA binding site of the peptidyltransferase center. This is Large ribosomal subunit protein uL6 from Brucella melitensis biotype 1 (strain ATCC 23456 / CCUG 17765 / NCTC 10094 / 16M).